The sequence spans 516 residues: Multicopper oxidase CueO (516 aa).

Residues 1-28 constitute a signal peptide (tat-type signal); sequence MQRRDFLKYSVALGVASALPLWSRAVFA. Plastocyanin-like domains are found at residues 55 to 165 and 227 to 292; these read GQST…IEDD and PRGW…DNKP. The Cu cation site is built by histidine 101, histidine 103, histidine 141, and histidine 143. The segment at 355 to 400 is methionine-rich region; the sequence is MDPMLDMMGMQMLMEKYGDQAMAGMDHSQMMGHMGHGNMNHMNHGG. One can recognise a Plastocyanin-like 3 domain in the interval 402-516; the sequence is FDFHHANKIN…DTGMMLGFTV (115 aa). Cu cation is bound by residues histidine 443, histidine 446, histidine 448, histidine 499, cysteine 500, histidine 501, and histidine 505.

This sequence belongs to the multicopper oxidase family. As to quaternary structure, monomer. Requires Cu cation as cofactor. Post-translationally, exported by the Tat system. The position of the signal peptide cleavage has been experimentally proven.

The protein localises to the periplasm. The catalysed reaction is 4 Cu(+) + O2 + 4 H(+) = 4 Cu(2+) + 2 H2O. With respect to regulation, ferroxidase and phenoloxidase activities are enhanced considerably in the presence of excess copper ions. A labile regulatory copper ion near the T1 copper site is important for the copper associated activation of enzyme activity. Ag(+) acts as a potent inhibitor of oxidase activity by binding at Cu(+) binding sites, blocking Cu(+) substrate binding and oxidation. pPD oxidase activity is strongly inhibited by sodium azide, an inhibitor of the electron transfer. Functionally, multicopper oxidase involved in copper homeostasis and copper tolerance under aerobic conditions. Is responsible for the oxidation of Cu(+) to the less harmful Cu(2+) in the periplasm, thereby preventing Cu(+) from entering the cytoplasm. Probably primarily functions as a cuprous oxidase in vivo. In vitro, in the presence of excess copper ions, exhibits ferroxidase and phenoloxidase activities. Fe(2+) is an excellent substrate in the presence of excess Cu(2+), but is inactive in the absence of Cu(2+). Oxidizes the phenolate iron siderophores enterobactin, 2,3-dihydroxybenzoate (2,3-DHB) and 3-hydroxyanthranilate (3-HAA). Oxidation and thus inactivation of enterobactin could protect cells from the interaction of enterobactin with copper and play a central role as an interface between copper detoxification and iron homeostasis. Also oxidizes a variety of phenolic model substrates, including 2,2'-azinobis(3-ethylbenzthiazolinesulfonic acid) (ABTS), p-phenylenediamine (pPD), 2,6-dimethoxyphenol (2,6-DMP) and 3,4-dihydroxybenzoic acid (3,4-DHB). The protein is Multicopper oxidase CueO of Escherichia coli (strain K12).